Here is a 148-residue protein sequence, read N- to C-terminus: 3-dehydroquinate dehydratase (148 aa).

Tyrosine 23 (proton acceptor) is an active-site residue. Positions 74, 80, and 87 each coordinate substrate. Histidine 100 functions as the Proton donor in the catalytic mechanism. Residues 101 to 102 (IS) and arginine 111 each bind substrate.

Belongs to the type-II 3-dehydroquinase family. Homododecamer.

The enzyme catalyses 3-dehydroquinate = 3-dehydroshikimate + H2O. It functions in the pathway metabolic intermediate biosynthesis; chorismate biosynthesis; chorismate from D-erythrose 4-phosphate and phosphoenolpyruvate: step 3/7. Catalyzes a trans-dehydration via an enolate intermediate. The polypeptide is 3-dehydroquinate dehydratase (Halothermothrix orenii (strain H 168 / OCM 544 / DSM 9562)).